We begin with the raw amino-acid sequence, 70 residues long: Cold shock-like protein CspH (70 aa).

The region spanning 7–67 (GIVKTFDRKS…GLRGPTAANV (61 aa)) is the CSD domain.

The protein localises to the cytoplasm. The protein is Cold shock-like protein CspH (cspH) of Escherichia coli O6:H1 (strain CFT073 / ATCC 700928 / UPEC).